Reading from the N-terminus, the 154-residue chain is Superoxide dismutase [Cu-Zn] (154 aa).

Residues histidine 47, histidine 49, and histidine 64 each contribute to the Cu cation site. A disulfide bridge links cysteine 58 with cysteine 147. Positions 64, 72, 81, and 84 each coordinate Zn(2+). Histidine 121 provides a ligand contact to Cu cation. Positions aspartate 125–lysine 137 are enriched in basic and acidic residues. The interval aspartate 125 to cysteine 147 is disordered. Residue arginine 144 coordinates substrate.

The protein belongs to the Cu-Zn superoxide dismutase family. In terms of assembly, homodimer. Cu cation serves as cofactor. Requires Zn(2+) as cofactor.

The protein localises to the cytoplasm. The enzyme catalyses 2 superoxide + 2 H(+) = H2O2 + O2. Destroys radicals which are normally produced within the cells and which are toxic to biological systems. This chain is Superoxide dismutase [Cu-Zn], found in Aspergillus niger (strain ATCC MYA-4892 / CBS 513.88 / FGSC A1513).